The sequence spans 351 residues: GTPase Obg (351 aa).

An Obg domain is found at 1 to 159; the sequence is MKFLDQCKIY…RWVWLRLKLI (159 aa). Residues 160–327 enclose the OBG-type G domain; the sequence is ADAGLVGLPN…MLFELLRHIR (168 aa). GTP-binding positions include 166–173, 191–195, 212–215, 279–282, and 308–310; these read GLPNAGKS, FTTLT, DIPG, NKID, and SGA. 2 residues coordinate Mg(2+): S173 and T193.

Belongs to the TRAFAC class OBG-HflX-like GTPase superfamily. OBG GTPase family. Monomer. Mg(2+) serves as cofactor.

It is found in the cytoplasm. Its function is as follows. An essential GTPase which binds GTP, GDP and possibly (p)ppGpp with moderate affinity, with high nucleotide exchange rates and a fairly low GTP hydrolysis rate. Plays a role in control of the cell cycle, stress response, ribosome biogenesis and in those bacteria that undergo differentiation, in morphogenesis control. This chain is GTPase Obg, found in Rhodospirillum centenum (strain ATCC 51521 / SW).